We begin with the raw amino-acid sequence, 146 residues long: MNPAHLLILAAVCVSPLGASSNRPMPLNLYQFKNMIQCTVPNRSWWDFADYGCYCGRGGSGTPVDDLDRCCQVHDNCYGEAEKISRCWPYFKTYSYECSQGTLTCKGGNDACAAAVCDCDRLAAICFAGAPYNDNNYNIDLKARCQ.

Residues 1–21 (MNPAHLLILAAVCVSPLGASS) form the signal peptide. Residues 22 to 27 (NRPMPL) constitute a propeptide that is removed on maturation. Disulfide bonds link Cys-38-Cys-98, Cys-53-Cys-145, Cys-55-Cys-71, Cys-70-Cys-126, Cys-77-Cys-119, Cys-87-Cys-112, and Cys-105-Cys-117. Ca(2+) is bound by residues Tyr-54, Gly-56, and Gly-58. His-74 is a catalytic residue. Asp-75 serves as a coordination point for Ca(2+). The active site involves Asp-120.

It belongs to the phospholipase A2 family. Group I subfamily. D49 sub-subfamily. Ca(2+) is required as a cofactor. As to expression, expressed by the venom gland.

The protein localises to the secreted. It carries out the reaction a 1,2-diacyl-sn-glycero-3-phosphocholine + H2O = a 1-acyl-sn-glycero-3-phosphocholine + a fatty acid + H(+). Functionally, PLA2 catalyzes the calcium-dependent hydrolysis of the 2-acyl groups in 3-sn-phosphoglycerides. The sequence is that of Acidic phospholipase A2 D from Naja sputatrix (Malayan spitting cobra).